The sequence spans 556 residues: Oxygen-dependent choline dehydrogenase (556 aa).

4–33 (DYIIIGAGSAGNVLATRLTEDPNTTVLLLE) is an FAD binding site. Catalysis depends on His-473, which acts as the Proton acceptor.

Belongs to the GMC oxidoreductase family. The cofactor is FAD.

The enzyme catalyses choline + A = betaine aldehyde + AH2. The catalysed reaction is betaine aldehyde + NAD(+) + H2O = glycine betaine + NADH + 2 H(+). Its pathway is amine and polyamine biosynthesis; betaine biosynthesis via choline pathway; betaine aldehyde from choline (cytochrome c reductase route): step 1/1. Its function is as follows. Involved in the biosynthesis of the osmoprotectant glycine betaine. Catalyzes the oxidation of choline to betaine aldehyde and betaine aldehyde to glycine betaine at the same rate. The chain is Oxygen-dependent choline dehydrogenase from Escherichia coli O6:K15:H31 (strain 536 / UPEC).